The chain runs to 167 residues: MSEAAQLRRGLKPKGKTYGLTNQKRREIREIFDLFDIDGSGSIDASELNVAMRSLGFEMNNQQINELMAEVDKNQSGAIDFDEFVHMMTTKFGERDSIDELSKAFKIIDHDNNGKISPRDIKMIAKELGENFTDNDIEEMIEEADRDKDGEVNLEEFMKMMKRTSYG.

4 consecutive EF-hand domains span residues 23–58, 59–94, 96–131, and 132–167; these read QKRREIREIFDLFDIDGSGSIDASELNVAMRSLGFE, MNNQQINELMAEVDKNQSGAIDFDEFVHMMTTKFGE, DSIDELSKAFKIIDHDNNGKISPRDIKMIAKELGEN, and FTDNDIEEMIEEADRDKDGEVNLEEFMKMMKRTSYG. Ca(2+)-binding residues include Asp36, Asp38, Ser40, Ser42, Glu47, Asp72, Asn74, Ser76, Glu83, Asp109, Asp111, Asn113, Lys115, Asp120, Asp145, Asp147, Asp149, Glu151, and Glu156.

Belongs to the centrin family. In terms of assembly, interacts with RAD4. Calcium is required for this interaction. Interacts with SAC3B. As to expression, expressed in leaves, roots, and at lower level in stems. Barely detectable in flower buds and flowers.

It is found in the cytoplasm. The protein resides in the nucleus. Its function is as follows. Potential calcium sensor that binds calcium in vitro. Modulates homologous recombination and nucleotide excision repair (NER). Involved in the early response to UV irradiation. In Arabidopsis thaliana (Mouse-ear cress), this protein is Calcium-binding protein CML19.